Consider the following 304-residue polypeptide: Non-specific ribonucleoside hydrolase RihC (304 aa).

Histidine 233 is a catalytic residue.

Belongs to the IUNH family. RihC subfamily.

Hydrolyzes both purine and pyrimidine ribonucleosides with a broad-substrate specificity. The polypeptide is Non-specific ribonucleoside hydrolase RihC (Shigella sonnei (strain Ss046)).